We begin with the raw amino-acid sequence, 225 residues long: MEKLLWCFLTLVSFSNMSDQAGMHKKAFVFPKESDNSYVSLNAQLKKPLKAFTVCLYFYTDLSMTRGYSIFSYATRRQFNEILLFWSKDIGYSFSVGGDEIIFKVSDIPVDPTHLCASWESSTGIAELWVDGKPMVRKSLKKGYILGPEASIILGQDQDSFGGSFEKQQSLVGDIGNVNMWDYALSPEEINTIYAGGTFSPNVLDWRELTYQVRGEVHVKPQLWP.

The N-terminal stretch at 1-20 (MEKLLWCFLTLVSFSNMSDQ) is a signal peptide. Positions 24–225 (HKKAFVFPKE…EVHVKPQLWP (202 aa)) constitute a Pentraxin (PTX) domain. A disulfide bond links C55 and C116. Residues N80, Q158, D159, and Q169 each contribute to the Ca(2+) site.

This sequence belongs to the pentraxin family. In terms of assembly, homopentamer. Pentraxin (or pentaxin) have a discoid arrangement of 5 non-covalently bound subunits. Interacts with FCN1; may regulate monocyte activation by FCN1. Requires Ca(2+) as cofactor. As to expression, found in plasma.

The protein resides in the secreted. In terms of biological role, displays several functions associated with host defense: it promotes agglutination, bacterial capsular swelling, phagocytosis and complement fixation through its calcium-dependent binding to phosphorylcholine. Can interact with DNA and histones and may scavenge nuclear material released from damaged circulating cells. This is C-reactive protein (CRP) from Oryctolagus cuniculus (Rabbit).